A 278-amino-acid polypeptide reads, in one-letter code: HTH-type transcriptional activator RhaS (278 aa).

The 99-residue stretch at 174-272 folds into the HTH araC/xylS-type domain; the sequence is NQLMAWLEDH…NWSPRDIRQG (99 aa). 2 DNA-binding regions (H-T-H motif) span residues 191–212 and 239–262; these read EAVAEQFSLSLRTLHRQLKQHT and VTEIAYRCGFGDSNHFSTLFRREF.

Binds DNA as a dimer.

The protein localises to the cytoplasm. Its function is as follows. Activates expression of the rhaBAD and rhaT operons. In Salmonella agona (strain SL483), this protein is HTH-type transcriptional activator RhaS.